The following is a 145-amino-acid chain: Lipoprotein signal peptidase (145 aa).

The next 2 membrane-spanning stretches (helical) occupy residues 57–77 (LFFI…MIKL) and 79–99 (ENSL…GNLI). Residues D109 and D124 contribute to the active site. The helical transmembrane segment at 120–140 (FNVADSFIVVGAIILGYLMIF) threads the bilayer.

Belongs to the peptidase A8 family.

Its subcellular location is the cell membrane. The catalysed reaction is Release of signal peptides from bacterial membrane prolipoproteins. Hydrolyzes -Xaa-Yaa-Zaa-|-(S,diacylglyceryl)Cys-, in which Xaa is hydrophobic (preferably Leu), and Yaa (Ala or Ser) and Zaa (Gly or Ala) have small, neutral side chains.. Its pathway is protein modification; lipoprotein biosynthesis (signal peptide cleavage). This protein specifically catalyzes the removal of signal peptides from prolipoproteins. This chain is Lipoprotein signal peptidase, found in Caldanaerobacter subterraneus subsp. tengcongensis (strain DSM 15242 / JCM 11007 / NBRC 100824 / MB4) (Thermoanaerobacter tengcongensis).